Reading from the N-terminus, the 54-residue chain is uncharacterized protein (54 aa).

The segment at 1-54 (MWTLKARKEHTGISGKPTARTDRHGSTRSGDSELQASARRFSRLPDRCGAQGVT) is disordered.

This is an uncharacterized protein from Mycobacterium tuberculosis (strain ATCC 25618 / H37Rv).